A 908-amino-acid polypeptide reads, in one-letter code: Alanine--tRNA ligase (908 aa).

Zn(2+)-binding residues include His-596, His-600, Cys-698, and His-702.

This sequence belongs to the class-II aminoacyl-tRNA synthetase family. Requires Zn(2+) as cofactor.

It is found in the cytoplasm. It catalyses the reaction tRNA(Ala) + L-alanine + ATP = L-alanyl-tRNA(Ala) + AMP + diphosphate. Functionally, catalyzes the attachment of alanine to tRNA(Ala) in a two-step reaction: alanine is first activated by ATP to form Ala-AMP and then transferred to the acceptor end of tRNA(Ala). Also edits incorrectly charged Ser-tRNA(Ala) and Gly-tRNA(Ala) via its editing domain. The sequence is that of Alanine--tRNA ligase from Lysinibacillus sphaericus (strain C3-41).